Consider the following 205-residue polypeptide: Probable GTP-binding protein EngB (205 aa).

One can recognise an EngB-type G domain in the interval 29–203 (QGAEIAFIGR…KAVLSQWFSS (175 aa)). Residues 37–44 (GRSNAGKS), 64–68 (GRTQM), 82–85 (DLPG), 149–152 (TKSD), and 182–184 (FSS) each bind GTP. Positions 44 and 66 each coordinate Mg(2+).

It belongs to the TRAFAC class TrmE-Era-EngA-EngB-Septin-like GTPase superfamily. EngB GTPase family. It depends on Mg(2+) as a cofactor.

In terms of biological role, necessary for normal cell division and for the maintenance of normal septation. This Coxiella burnetii (strain CbuK_Q154) (Coxiella burnetii (strain Q154)) protein is Probable GTP-binding protein EngB.